The chain runs to 424 residues: Serine--tRNA ligase (424 aa).

232–234 provides a ligand contact to L-serine; that stretch reads TAE. ATP is bound at residue 263-265; it reads RQE. Glu-286 serves as a coordination point for L-serine. Residue 350 to 353 participates in ATP binding; the sequence is EIGS. Ser-386 contributes to the L-serine binding site.

It belongs to the class-II aminoacyl-tRNA synthetase family. Type-1 seryl-tRNA synthetase subfamily. As to quaternary structure, homodimer. The tRNA molecule binds across the dimer.

It localises to the cytoplasm. It carries out the reaction tRNA(Ser) + L-serine + ATP = L-seryl-tRNA(Ser) + AMP + diphosphate + H(+). The catalysed reaction is tRNA(Sec) + L-serine + ATP = L-seryl-tRNA(Sec) + AMP + diphosphate + H(+). The protein operates within aminoacyl-tRNA biosynthesis; selenocysteinyl-tRNA(Sec) biosynthesis; L-seryl-tRNA(Sec) from L-serine and tRNA(Sec): step 1/1. Its function is as follows. Catalyzes the attachment of serine to tRNA(Ser). Is also able to aminoacylate tRNA(Sec) with serine, to form the misacylated tRNA L-seryl-tRNA(Sec), which will be further converted into selenocysteinyl-tRNA(Sec). This chain is Serine--tRNA ligase, found in Aster yellows witches'-broom phytoplasma (strain AYWB).